We begin with the raw amino-acid sequence, 375 residues long: OVARIAN TUMOR DOMAIN-containing deubiquitinating enzyme 7 (375 aa).

Positions 1-18 are enriched in basic residues; sequence MAKTKQQKSKPKKQPHQK. Residues 1-23 are disordered; it reads MAKTKQQKSKPKKQPHQKQGKDC. The region spanning 37–161 is the OTU domain; it reads LKIIQVTADG…GEHYNSVRSK (125 aa). The active site involves Asp-45. Cys-48 serves as the catalytic Nucleophile. His-154 is a catalytic residue. A UBA-like domain is found at 202–250; that stretch reads HVNAGAIKVVMSGSCCDNTEKAEQVLLQVNGDVDAAIEFLIADQGMESL. 2 stretches are compositionally biased toward polar residues: residues 251-264 and 290-305; these read TEND…SDTI and ASGN…CTTQ. The segment at 251–306 is disordered; it reads TENDTETASASDTINPKHASDSPMENTEQAREELIEEESASGNNSETVQAKCTTQT. Positions 308–315 match the Nuclear localization signal motif; it reads DKKIPRNK.

This sequence belongs to the peptidase C85 family.

The protein resides in the nucleus. The enzyme catalyses Thiol-dependent hydrolysis of ester, thioester, amide, peptide and isopeptide bonds formed by the C-terminal Gly of ubiquitin (a 76-residue protein attached to proteins as an intracellular targeting signal).. In terms of biological role, hydrolase that can remove conjugated ubiquitin from proteins in vitro and may therefore play an important regulatory role at the level of protein turnover by preventing degradation. Cysteine protease with a preference for 'Lys-63' over 'Lys-48' over 'Met-1' -linked ubiquitin (UB) tetramers as substrates. Also cleaves RUB-GST fusion. In Arabidopsis thaliana (Mouse-ear cress), this protein is OVARIAN TUMOR DOMAIN-containing deubiquitinating enzyme 7.